The following is a 170-amino-acid chain: Acetyl-CoA decarbonylase/synthase complex subunit epsilon 2 (170 aa).

It belongs to the CdhB family. In terms of assembly, heterotetramer of two alpha and two epsilon subunits. The ACDS complex is made up of alpha, epsilon, beta, gamma and delta subunits with a probable stoichiometry of (alpha(2)epsilon(2))(4)-beta(8)-(gamma(1)delta(1))(8).

It functions in the pathway one-carbon metabolism; methanogenesis from acetate. Part of a complex that catalyzes the reversible cleavage of acetyl-CoA, allowing growth on acetate as sole source of carbon and energy. The alpha-epsilon subcomponent functions as a carbon monoxide dehydrogenase. The precise role of the epsilon subunit is unclear; it may have a stabilizing role within the alpha(2)epsilon(2) component and/or be involved in electron transfer to FAD during a potential FAD-mediated CO oxidation. This Methanosarcina acetivorans (strain ATCC 35395 / DSM 2834 / JCM 12185 / C2A) protein is Acetyl-CoA decarbonylase/synthase complex subunit epsilon 2 (cdhB2).